The sequence spans 285 residues: E2F-associated phosphoprotein (285 aa).

Residue M1 is modified to N-acetylmethionine. The segment at 1-30 (MNRLPDDYDPYAVEEPSDEEPALSSSEDEV) is disordered. The segment covering 15–30 (EPSDEEPALSSSEDEV) has biased composition (acidic residues). S17 carries the post-translational modification Phosphoserine. Phosphothreonine is present on T37. Residues 48-96 (CLTGESESSSEDEFEKEMEAELNSTMKTMEDKLSSLGTGSSSGNGKVAT) form a disordered region. Acidic residues predominate over residues 55–67 (SSSEDEFEKEMEA). The segment covering 81–92 (SSLGTGSSSGNG) has biased composition (low complexity). 2 positions are modified to phosphoserine: S109 and S111. The segment at 118-144 (VQVTKKKKKKQHKIPTNDELLYDPEKD) is disordered. The span at 121 to 130 (TKKKKKKQHK) shows a compositional bias: basic residues.

Interacts with E2F1. The C-terminal half binds the N-terminal of E2F1. Also interacts with E2F2 and E2F3, but not E2F4. Ubiquitously expressed. Highest levels in heart, placenta, skeletal muscle and pancreas. Lower levels in brain, lung and kidney. In the brain, expressed in all regions with high levels in the cerebellum and cerebral cortex. Expressed in COS1 and transformed skin fibroblasts.

The protein localises to the cytoplasm. The protein resides in the nucleus. Its function is as follows. May play an important role in the fine-tuning of both major E2F1 activities, the regulation of the cell-cycle and the induction of apoptosis. Promotes S-phase entry, and inhibits p14(ARP) expression. This is E2F-associated phosphoprotein (EAPP) from Homo sapiens (Human).